A 1179-amino-acid chain; its full sequence is ATP-dependent helicase/deoxyribonuclease subunit B (1179 aa).

This sequence belongs to the helicase family. AddB/RexB type 2 subfamily. As to quaternary structure, heterodimer of AddA and RexB. It depends on Mg(2+) as a cofactor.

The heterodimer acts as both an ATP-dependent DNA helicase and an ATP-dependent, dual-direction single-stranded exonuclease. Recognizes the chi site generating a DNA molecule suitable for the initiation of homologous recombination. This subunit has 5' -&gt; 3' nuclease activity but not helicase activity. This is ATP-dependent helicase/deoxyribonuclease subunit B from Lactobacillus delbrueckii subsp. bulgaricus (strain ATCC 11842 / DSM 20081 / BCRC 10696 / JCM 1002 / NBRC 13953 / NCIMB 11778 / NCTC 12712 / WDCM 00102 / Lb 14).